We begin with the raw amino-acid sequence, 393 residues long: Translation initiation factor eIF2B subunit beta (393 aa).

The tract at residues 105 to 125 (VSSSNSSSPSQKRDIPSNEKL) is disordered. Phosphoserine is present on residues serine 106, serine 108, and serine 112.

It belongs to the eIF-2B alpha/beta/delta subunits family. In terms of assembly, component of the translation initiation factor 2B (eIF2B) complex which is a heterodecamer of two sets of five different subunits: alpha, beta, gamma, delta and epsilon. Subunits alpha, beta and delta comprise a regulatory subcomplex and subunits epsilon and gamma comprise a catalytic subcomplex. Within the complex, the hexameric regulatory complex resides at the center, with the two heterodimeric catalytic subcomplexes bound on opposite sides.

Its subcellular location is the cytoplasm. The protein localises to the cytosol. Acts as a component of the translation initiation factor 2B (eIF2B) complex, which catalyzes the exchange of GDP for GTP on the eukaryotic initiation factor 2 (eIF2) complex gamma subunit. Its guanine nucleotide exchange factor activity is repressed when bound to eIF2 complex phosphorylated on the alpha subunit, thereby limiting the amount of methionyl-initiator methionine tRNA available to the ribosome and consequently global translation is repressed. This chain is Translation initiation factor eIF2B subunit beta (tif222), found in Schizosaccharomyces pombe (strain 972 / ATCC 24843) (Fission yeast).